Reading from the N-terminus, the 1380-residue chain is Respiration factor 2 (1380 aa).

C2H2-type zinc fingers lie at residues 151–173 (FLCP…QHSH) and 179–202 (YLCI…QKLH). The disordered stretch occupies residues 208 to 231 (TGDPRRMTPAPNSTSSFASKRRHS). Residues Ser231 and Ser322 each carry the phosphoserine modification. Disordered stretches follow at residues 413–445 (NLNL…NSNN), 544–584 (SPKN…NIDP), 624–643 (SRSS…SLNH), and 652–688 (LNLS…KRRR). The segment covering 424–445 (QQQQQQQQQQNSTSSTIVNSNN) has biased composition (low complexity). Ser544 carries the phosphoserine modification. The segment covering 544 to 569 (SPKNPPTTVSDSSSTINFNPGTNNLL) has biased composition (polar residues). Basic and acidic residues predominate over residues 575-584 (PNDKDSNIDP). Low complexity predominate over residues 624–634 (SRSSIPNKSPP). A Phosphoserine modification is found at Ser632. The segment covering 652–681 (LNLSLNGSTDLPSTPQNQLKEPSYSDPISH) has biased composition (polar residues).

The protein belongs to the RSF2/TDA9 family.

It localises to the nucleus. Transcription factor that regulates expression of both nuclear and mitochondrial genes, and more specifically those required for glycerol-based growth and respiration. This chain is Respiration factor 2 (RSF2), found in Saccharomyces cerevisiae (strain ATCC 204508 / S288c) (Baker's yeast).